The following is a 496-amino-acid chain: Probable cytosol aminopeptidase (496 aa).

Positions 266 and 271 each coordinate Mn(2+). Residue Lys278 is part of the active site. Asp289, Asp348, and Glu350 together coordinate Mn(2+). Arg352 is an active-site residue.

Belongs to the peptidase M17 family. It depends on Mn(2+) as a cofactor.

The protein resides in the cytoplasm. The catalysed reaction is Release of an N-terminal amino acid, Xaa-|-Yaa-, in which Xaa is preferably Leu, but may be other amino acids including Pro although not Arg or Lys, and Yaa may be Pro. Amino acid amides and methyl esters are also readily hydrolyzed, but rates on arylamides are exceedingly low.. It carries out the reaction Release of an N-terminal amino acid, preferentially leucine, but not glutamic or aspartic acids.. Functionally, presumably involved in the processing and regular turnover of intracellular proteins. Catalyzes the removal of unsubstituted N-terminal amino acids from various peptides. This is Probable cytosol aminopeptidase from Pseudomonas syringae pv. tomato (strain ATCC BAA-871 / DC3000).